The primary structure comprises 499 residues: Anaerobic magnesium-protoporphyrin IX monomethyl ester cyclase (499 aa).

The B12-binding domain occupies 9–145; that stretch reads PHPAIGSRIP…AALENHNDLN (137 aa). The Radical SAM core domain occupies 188–420; sequence YGGKQAVVIQ…PPWRIFLWVK (233 aa). [4Fe-4S] cluster-binding residues include cysteine 202, cysteine 206, and cysteine 209.

The protein belongs to the BchE family. It depends on [4Fe-4S] cluster as a cofactor. Requires adenosylcob(III)alamin as cofactor.

The enzyme catalyses Mg-protoporphyrin IX 13-monomethyl ester + 3 S-adenosyl-L-methionine + H2O = 3,8-divinyl protochlorophyllide a + 3 5'-deoxyadenosine + 3 L-methionine + 4 H(+). Its pathway is porphyrin-containing compound metabolism; bacteriochlorophyll biosynthesis (light-independent). In terms of biological role, involved in the tetrapyrrole biosynthetic pathways leading to chlorophyll and bacteriochlorophyll (BChl). Catalyzes the anaerobic formation of the isocyclic ring (E-ring) in Mg-protoporphyrin monomethyl ester (MPE) to yield protochlorophyllide a (PChlide a) via a six-electron oxidation and the formation of an oxo group at position C13 using oxygen from a water molecule. This chain is Anaerobic magnesium-protoporphyrin IX monomethyl ester cyclase, found in Synechocystis sp. (strain ATCC 27184 / PCC 6803 / Kazusa).